Here is a 320-residue protein sequence, read N- to C-terminus: MSHSSTALLHPYVAARATEKFAPIYFFCHPLQSAETDVAERANKRPIWIMGHMVNANYQIDEFVNLGANSIETDVSFDSSANPEYTYHGVPCDCRGWCKKWEYFNNFLKALRKATTPGDSKYHEKLVLVVFDLKTGSLYDNQAYDAGKKLAKNLLQHYWNNGNNGGRAYIVLSIPNLAHYKLITGFKETLKTEGHPELMEKVGYDFSGNDNIDQVANAYKKAGVTGHVWQSDGITNCLLRGLDRVRKAVANRDSSNGYINKVYYWTVDKRQSTKNALDAGVDGIMPNYPDVIADVPNESAYKAKFRIASYDDNPWETFKN.

An N-terminal signal peptide occupies residues 1-15; sequence MSHSSTALLHPYVAA. Residues 16 to 41 constitute a propeptide that is removed on maturation; the sequence is RATEKFAPIYFFCHPLQSAETDVAER. The active site involves histidine 52. Residues glutamate 72 and aspartate 74 each contribute to the Mg(2+) site. Catalysis depends on histidine 88, which acts as the Nucleophile. Disulfide bonds link cysteine 92–cysteine 98 and cysteine 94–cysteine 237. Position 132 (aspartate 132) interacts with Mg(2+). Residue asparagine 297 is glycosylated (N-linked (GlcNAc...) asparagine).

It belongs to the arthropod phospholipase D family. Class II subfamily. Requires Mg(2+) as cofactor. Expressed by the venom gland.

The protein localises to the secreted. It carries out the reaction an N-(acyl)-sphingosylphosphocholine = an N-(acyl)-sphingosyl-1,3-cyclic phosphate + choline. The catalysed reaction is an N-(acyl)-sphingosylphosphoethanolamine = an N-(acyl)-sphingosyl-1,3-cyclic phosphate + ethanolamine. The enzyme catalyses a 1-acyl-sn-glycero-3-phosphocholine = a 1-acyl-sn-glycero-2,3-cyclic phosphate + choline. It catalyses the reaction a 1-acyl-sn-glycero-3-phosphoethanolamine = a 1-acyl-sn-glycero-2,3-cyclic phosphate + ethanolamine. Its function is as follows. Dermonecrotic toxins cleave the phosphodiester linkage between the phosphate and headgroup of certain phospholipids (sphingolipid and lysolipid substrates), forming an alcohol (often choline) and a cyclic phosphate. This toxin acts on sphingomyelin (SM). It may also act on ceramide phosphoethanolamine (CPE), lysophosphatidylcholine (LPC) and lysophosphatidylethanolamine (LPE), but not on lysophosphatidylserine (LPS), and lysophosphatidylglycerol (LPG). It acts by transphosphatidylation, releasing exclusively cyclic phosphate products as second products. Induces dermonecrosis, hemolysis, increased vascular permeability, edema, inflammatory response, and platelet aggregation. This is Dermonecrotic toxin LarSicTox-alphaIB2a from Loxosceles arizonica (Arizona brown spider).